The primary structure comprises 718 residues: Ribosome-releasing factor 2, mitochondrial (718 aa).

The transit peptide at 1–29 (MLKCAWQNGPRQSNRWLWQLSNQIWKRSY) directs the protein to the mitochondrion. The region spanning 31 to 310 (SKIRNIGILA…AVNSYLPAPE (280 aa)) is the tr-type G domain. Residues 40 to 47 (AHIDAGKT), 104 to 108 (DTPGH), and 158 to 161 (NKMD) each bind GTP.

The protein belongs to the TRAFAC class translation factor GTPase superfamily. Classic translation factor GTPase family. EF-G/EF-2 subfamily.

It is found in the mitochondrion. Mitochondrial GTPase that mediates the disassembly of ribosomes from messenger RNA at the termination of mitochondrial protein biosynthesis. Not involved in the GTP-dependent ribosomal translocation step during translation elongation. This is Ribosome-releasing factor 2, mitochondrial from Drosophila erecta (Fruit fly).